The primary structure comprises 476 residues: Protein DETOXIFICATION 1 (476 aa).

Helical transmembrane passes span 35–55 (AAPMATVTIAQYLLPVISVMV), 66–86 (GVALANSFTNVTGFSIMCGLV), 117–137 (IPICFLISILWLYIEKILISL), 146–166 (IAGSYAFWLIPALFGQAIVIP), 184–204 (AVTTLLFHVLVCWTLVFLFGL), 208–228 (GPAMATSVSFWFYAVILSCYV), 260–280 (AAMICLEWWLFEILILCSGLL), 289–309 (VLSICLTIETLHYVISAGVAA), 331–351 (VLAGLCLWIVESAFFSILLFT), 370–390 (VADLTPLLCLSFILDGFTAVL), 402–422 (IGAWNNTVSYYLVGAPVGIYL), and 433–453 (LWCGVVVGSTVQATILAIVTA).

It belongs to the multi antimicrobial extrusion (MATE) (TC 2.A.66.1) family. Ubiquitous. Highest expression in flowers and stems.

The protein resides in the cell membrane. Its function is as follows. Efflux carrier for plant-derived alkaloids, antibiotics, heavy metal and other toxic compounds. Involved in cadmium detoxification. Requires probably a proton-motive force for the efflux. The protein is Protein DETOXIFICATION 1 of Arabidopsis thaliana (Mouse-ear cress).